A 176-amino-acid chain; its full sequence is Inner membrane-spanning protein YciB (176 aa).

Transmembrane regions (helical) follow at residues 3 to 23 (FLFD…WGIF), 24 to 44 (TATA…AFRH), 49 to 69 (TMLW…LVLH), 81 to 101 (LYWL…NNLI), 119 to 139 (LNVA…YVVH), and 149 to 169 (FKLF…SLWL).

The protein belongs to the YciB family.

It localises to the cell inner membrane. In terms of biological role, plays a role in cell envelope biogenesis, maintenance of cell envelope integrity and membrane homeostasis. This is Inner membrane-spanning protein YciB from Burkholderia ambifaria (strain MC40-6).